The sequence spans 485 residues: MPGTSVSDLPTTATAVDAPALLPLPVGRPQAPALVRGKLYIKTHGCQMNEYDSAKMADVLAASEGLELTDNPEDADVVLVNTCSIREKAQEKVFSQLGRWKALKAGGKPVIIGVGGCVASQEGEAIVKRAPYVDLVFGPQTLHRLPELIRARRESGKSQVDISFPEIEKFDRLPEPRADGPSAFVSIMEGCSKYCSFCVVPYTRGEEVSRPFEDVLVEVAQLAAQGVREINLLGQNVNAYRGAYGADAGEPAQYADLGLLIRTIAQIDGIGRIRFTTSHPLEFSDSLVDAYRDVPQLANYLHLPVQAGSDRILSAMKRGYTALEFKSKIRKLRAVRPDISISSDFIVGFPGETDADFDKTMKLIEDVGFDQSFSFIYSRRPGTPASDLEDDTPDAVKQARLARLQAHINAHAAGISQRMVGSVQRVLVEGPSRRDANELTGKTENMRPVNFPGNPRLVGQFVDVLITEALSNSLRGRIQLDDSAA.

The region spanning 37–154 (GKLYIKTHGC…LPELIRARRE (118 aa)) is the MTTase N-terminal domain. Residues C46, C83, C117, C191, C195, and C198 each contribute to the [4Fe-4S] cluster site. The Radical SAM core domain occupies 177-416 (RADGPSAFVS…HINAHAAGIS (240 aa)). A TRAM domain is found at 417-480 (QRMVGSVQRV…SNSLRGRIQL (64 aa)).

This sequence belongs to the methylthiotransferase family. MiaB subfamily. In terms of assembly, monomer. The cofactor is [4Fe-4S] cluster.

Its subcellular location is the cytoplasm. It catalyses the reaction N(6)-dimethylallyladenosine(37) in tRNA + (sulfur carrier)-SH + AH2 + 2 S-adenosyl-L-methionine = 2-methylsulfanyl-N(6)-dimethylallyladenosine(37) in tRNA + (sulfur carrier)-H + 5'-deoxyadenosine + L-methionine + A + S-adenosyl-L-homocysteine + 2 H(+). Its function is as follows. Catalyzes the methylthiolation of N6-(dimethylallyl)adenosine (i(6)A), leading to the formation of 2-methylthio-N6-(dimethylallyl)adenosine (ms(2)i(6)A) at position 37 in tRNAs that read codons beginning with uridine. The sequence is that of tRNA-2-methylthio-N(6)-dimethylallyladenosine synthase from Xanthomonas campestris pv. campestris (strain 8004).